We begin with the raw amino-acid sequence, 557 residues long: CTP synthase (557 aa).

The amidoligase domain stretch occupies residues 1–270; it reads MTKYVFVTGG…DAIICEELKL (270 aa). Ser-13 is a CTP binding site. Residue Ser-13 coordinates UTP. ATP-binding positions include 14 to 19 and Asp-71; that span reads SLGKGI. Positions 71 and 144 each coordinate Mg(2+). CTP contacts are provided by residues 151-153, 191-196, and Lys-227; these read DIE and KTKPTQ. Residues 191–196 and Lys-227 each bind UTP; that span reads KTKPTQ. Positions 295–547 constitute a Glutamine amidotransferase type-1 domain; that stretch reads TIGMVGKYVD…VEAALAHQQS (253 aa). Gly-356 contacts L-glutamine. Cys-383 functions as the Nucleophile; for glutamine hydrolysis in the catalytic mechanism. L-glutamine is bound by residues 384–387, Glu-407, and Arg-473; that span reads LGMQ. Active-site residues include His-520 and Glu-522.

It belongs to the CTP synthase family. Homotetramer.

The enzyme catalyses UTP + L-glutamine + ATP + H2O = CTP + L-glutamate + ADP + phosphate + 2 H(+). It carries out the reaction L-glutamine + H2O = L-glutamate + NH4(+). The catalysed reaction is UTP + NH4(+) + ATP = CTP + ADP + phosphate + 2 H(+). Its pathway is pyrimidine metabolism; CTP biosynthesis via de novo pathway; CTP from UDP: step 2/2. Allosterically activated by GTP, when glutamine is the substrate; GTP has no effect on the reaction when ammonia is the substrate. The allosteric effector GTP functions by stabilizing the protein conformation that binds the tetrahedral intermediate(s) formed during glutamine hydrolysis. Inhibited by the product CTP, via allosteric rather than competitive inhibition. Its function is as follows. Catalyzes the ATP-dependent amination of UTP to CTP with either L-glutamine or ammonia as the source of nitrogen. Regulates intracellular CTP levels through interactions with the four ribonucleotide triphosphates. In Paraburkholderia xenovorans (strain LB400), this protein is CTP synthase.